Reading from the N-terminus, the 115-residue chain is Immunoglobulin kappa variable 5-48 (115 aa).

Positions 1–20 are cleaved as a signal peptide; it reads MVSTPQFLVFLLFWIPASRG. The segment at 21-43 is framework-1; the sequence is DILLTQSPAILSVSPGERVSFSC. C43 and C108 form a disulfide bridge. The interval 44 to 54 is complementarity-determining-1; it reads RASQSIGTSIH. Positions 55 to 69 are framework-2; sequence WYQQRTNGSPRLLIK. Residues 70 to 76 form a complementarity-determining-2 region; the sequence is YASESIS. A framework-3 region spans residues 77 to 108; it reads GIPSRFSGSGSGTDFTLSINSVESEDIADYYC. Residues 109–115 form a complementarity-determining-3 region; it reads QQSNSWP.

The protein is Immunoglobulin kappa variable 5-48 of Mus musculus (Mouse).